Reading from the N-terminus, the 296-residue chain is tRNA dimethylallyltransferase (296 aa).

Position 2 to 9 (2 to 9 (GPTASGKT)) interacts with ATP. A substrate-binding site is contributed by 4–9 (TASGKT). 3 interaction with substrate tRNA regions span residues 27–30 (DSAL), 151–155 (QRLAR), and 232–237 (RCVGYR).

This sequence belongs to the IPP transferase family. In terms of assembly, monomer. Requires Mg(2+) as cofactor.

The enzyme catalyses adenosine(37) in tRNA + dimethylallyl diphosphate = N(6)-dimethylallyladenosine(37) in tRNA + diphosphate. Its function is as follows. Catalyzes the transfer of a dimethylallyl group onto the adenine at position 37 in tRNAs that read codons beginning with uridine, leading to the formation of N6-(dimethylallyl)adenosine (i(6)A). This chain is tRNA dimethylallyltransferase, found in Shewanella pealeana (strain ATCC 700345 / ANG-SQ1).